Reading from the N-terminus, the 82-residue chain is Omega-conotoxin-like TxMKLT1-031 (82 aa).

A signal peptide spans 1–22 (MKLTCMMIVAVLFLTAWTLVMA). Residues 23–49 (DDSNNGLANLFSKSRDEMEDPEASKLE) constitute a propeptide that is removed on maturation. 3 cysteine pairs are disulfide-bonded: cysteine 53-cysteine 71, cysteine 60-cysteine 76, and cysteine 70-cysteine 81.

It belongs to the conotoxin O1 superfamily. As to expression, expressed by the venom duct.

The protein localises to the secreted. Its function is as follows. Omega-conotoxins act at presynaptic membranes, they bind and block voltage-gated calcium channels (Cav). In Conus textile (Cloth-of-gold cone), this protein is Omega-conotoxin-like TxMKLT1-031.